A 97-amino-acid chain; its full sequence is Co-chaperonin GroES (97 aa).

The protein belongs to the GroES chaperonin family. As to quaternary structure, heptamer of 7 subunits arranged in a ring. Interacts with the chaperonin GroEL.

The protein localises to the cytoplasm. In terms of biological role, together with the chaperonin GroEL, plays an essential role in assisting protein folding. The GroEL-GroES system forms a nano-cage that allows encapsulation of the non-native substrate proteins and provides a physical environment optimized to promote and accelerate protein folding. GroES binds to the apical surface of the GroEL ring, thereby capping the opening of the GroEL channel. The chain is Co-chaperonin GroES from Buchnera aphidicola subsp. Pterocomma populeum.